Here is a 149-residue protein sequence, read N- to C-terminus: Transcriptional regulator MraZ (149 aa).

2 consecutive SpoVT-AbrB domains span residues 7-54 (KYVN…GISH) and 83-126 (AVQL…QPQN).

The protein belongs to the MraZ family. In terms of assembly, forms oligomers.

The protein localises to the cytoplasm. It is found in the nucleoid. This chain is Transcriptional regulator MraZ, found in Rickettsia conorii (strain ATCC VR-613 / Malish 7).